A 573-amino-acid polypeptide reads, in one-letter code: Chaperone Ric-8 (573 aa).

Residues 308–324 show a composition bias toward basic and acidic residues; the sequence is ESHKEREQDNEKEKDTE. 2 disordered regions span residues 308–329 and 473–493; these read ESHK…GAGA and GTDY…QQQQ. A phosphoserine mark is found at S477, S478, S480, and S483.

It belongs to the synembryn family. In terms of assembly, interacts with GDP-bound G(i)-alpha protein G-i-alpha-65A. Does not interact with G-alpha proteins when they are in complex with subunits beta and gamma. Interacts with Frq2 in a Ca(2+)-independent manner but does not interact with Frq1. As to expression, expression in the embryo is primarily neural.

Its subcellular location is the cytoplasm. It is found in the cell cortex. The protein localises to the presynapse. Functionally, chaperone that specifically binds and folds some, but not all, nascent G alpha proteins prior to G protein heterotrimer formation, promoting their stability and activity. Also acts as a guanine nucleotide exchange factor (GEF) for G alpha proteins by stimulating exchange of bound GDP for free GTP. Plays a key role in asymmetric spindle positioning, a step for asymmetric cell division that generates cell diversity during development by activating G(i) alpha protein independently of G-protein coupled receptors. Required during gastrulation and sensory organ precursor (SOP) formation. Plays a role in positively regulating synapse number and neurotransmitter release. The sequence is that of Chaperone Ric-8 (ric8a) from Drosophila melanogaster (Fruit fly).